A 65-amino-acid chain; its full sequence is Large ribosomal subunit protein bL28 (65 aa).

The interval 1 to 21 (MAKKDQLTLRGPLYGNNRSHS) is disordered.

The protein belongs to the bacterial ribosomal protein bL28 family.

The chain is Large ribosomal subunit protein bL28 from Mycoplasma pneumoniae (strain ATCC 29342 / M129 / Subtype 1) (Mycoplasmoides pneumoniae).